The chain runs to 215 residues: ATP-dependent dethiobiotin synthetase BioD (215 aa).

13–18 (DIGKTV) lines the ATP pocket. A Mg(2+)-binding site is contributed by Thr17. Residue Lys38 is part of the active site. Thr42 provides a ligand contact to substrate. ATP is bound by residues Asp50, 115-118 (EGAG), and 175-176 (NH). Mg(2+) is bound by residues Asp50 and Glu115.

This sequence belongs to the dethiobiotin synthetase family. Homodimer. The cofactor is Mg(2+).

The protein resides in the cytoplasm. It catalyses the reaction (7R,8S)-7,8-diammoniononanoate + CO2 + ATP = (4R,5S)-dethiobiotin + ADP + phosphate + 3 H(+). It functions in the pathway cofactor biosynthesis; biotin biosynthesis; biotin from 7,8-diaminononanoate: step 1/2. Catalyzes a mechanistically unusual reaction, the ATP-dependent insertion of CO2 between the N7 and N8 nitrogen atoms of 7,8-diaminopelargonic acid (DAPA, also called 7,8-diammoniononanoate) to form a ureido ring. The sequence is that of ATP-dependent dethiobiotin synthetase BioD from Neisseria meningitidis serogroup C / serotype 2a (strain ATCC 700532 / DSM 15464 / FAM18).